We begin with the raw amino-acid sequence, 194 residues long: Adenylate kinase (194 aa).

An ATP-binding site is contributed by 12–17 (GSGKTT). An NMP region spans residues 34–63 (STGDLLREEVKKGTPLGATIASFIDNGQLV). Residues threonine 35, arginine 40, 61–63 (QLV), 88–91 (GFPR), and glutamine 95 contribute to the AMP site. The LID stretch occupies residues 130-136 (GRARGAD). Arginine 131 lines the ATP pocket. Residues arginine 133 and arginine 145 each coordinate AMP. Arginine 173 contributes to the ATP binding site.

Belongs to the adenylate kinase family. Monomer.

It localises to the cytoplasm. The enzyme catalyses AMP + ATP = 2 ADP. It participates in purine metabolism; AMP biosynthesis via salvage pathway; AMP from ADP: step 1/1. Catalyzes the reversible transfer of the terminal phosphate group between ATP and AMP. Plays an important role in cellular energy homeostasis and in adenine nucleotide metabolism. In Nitratiruptor sp. (strain SB155-2), this protein is Adenylate kinase.